The chain runs to 546 residues: CTP synthase (546 aa).

The interval 1 to 267 (MTKFIFVTGG…AEQVLDILQL (267 aa)) is amidoligase domain. S13 contributes to the CTP binding site. UTP is bound at residue S13. 14–19 (SIGKGI) serves as a coordination point for ATP. Y54 is an L-glutamine binding site. D71 contacts ATP. Positions 71 and 141 each coordinate Mg(2+). CTP contacts are provided by residues 148–150 (DIE), 188–193 (KTKPTQ), and K224. Residues 188–193 (KTKPTQ) and K224 each bind UTP. The 243-residue stretch at 292–534 (EVAIVGKYVR…IKAALGSDLT (243 aa)) folds into the Glutamine amidotransferase type-1 domain. L-glutamine is bound at residue G354. Residue C381 is the Nucleophile; for glutamine hydrolysis of the active site. L-glutamine-binding positions include 382-385 (LGMQ), E405, and R462. Residues H507 and E509 contribute to the active site.

It belongs to the CTP synthase family. Homotetramer.

The catalysed reaction is UTP + L-glutamine + ATP + H2O = CTP + L-glutamate + ADP + phosphate + 2 H(+). The enzyme catalyses L-glutamine + H2O = L-glutamate + NH4(+). It catalyses the reaction UTP + NH4(+) + ATP = CTP + ADP + phosphate + 2 H(+). Its pathway is pyrimidine metabolism; CTP biosynthesis via de novo pathway; CTP from UDP: step 2/2. With respect to regulation, allosterically activated by GTP, when glutamine is the substrate; GTP has no effect on the reaction when ammonia is the substrate. The allosteric effector GTP functions by stabilizing the protein conformation that binds the tetrahedral intermediate(s) formed during glutamine hydrolysis. Inhibited by the product CTP, via allosteric rather than competitive inhibition. Functionally, catalyzes the ATP-dependent amination of UTP to CTP with either L-glutamine or ammonia as the source of nitrogen. Regulates intracellular CTP levels through interactions with the four ribonucleotide triphosphates. The polypeptide is CTP synthase (Synechococcus sp. (strain ATCC 27144 / PCC 6301 / SAUG 1402/1) (Anacystis nidulans)).